The sequence spans 174 residues: Protein FanG (174 aa).

A signal peptide spans M1 to A21. A disulfide bond links C41 and C75.

The protein resides in the fimbrium. Involved in the biosynthesis of K99 fimbriae. This chain is Protein FanG (fanG), found in Escherichia coli.